The chain runs to 308 residues: Putative T-box protein 30/42 (308 aa).

A DNA-binding region (T-box) is located at residues 11–192 (MSNEELWKER…KHSTFGNRSE (182 aa)). The tract at residues 186–220 (TFGNRSEGGIKRKTSDAAGQLPSKRSSKKPVKKDV) is disordered.

Its subcellular location is the nucleus. Functionally, involved in the regulatory network to control embryonic patterning and morphogenesis. Implicated in negatively regulating vab-7 expression at the anterior of embryos. In Caenorhabditis elegans, this protein is Putative T-box protein 30/42 (tbx-30).